Reading from the N-terminus, the 924-residue chain is Isoleucine--tRNA ligase (924 aa).

Residues 57 to 67 (PYANGDIHMGH) carry the 'HIGH' region motif. An L-isoleucyl-5'-AMP-binding site is contributed by E552. A 'KMSKS' region motif is present at residues 593–597 (KMSKS). K596 lines the ATP pocket. Zn(2+) is bound by residues C891, C894, C911, and C914.

The protein belongs to the class-I aminoacyl-tRNA synthetase family. IleS type 1 subfamily. In terms of assembly, monomer. It depends on Zn(2+) as a cofactor.

It is found in the cytoplasm. It carries out the reaction tRNA(Ile) + L-isoleucine + ATP = L-isoleucyl-tRNA(Ile) + AMP + diphosphate. Functionally, catalyzes the attachment of isoleucine to tRNA(Ile). As IleRS can inadvertently accommodate and process structurally similar amino acids such as valine, to avoid such errors it has two additional distinct tRNA(Ile)-dependent editing activities. One activity is designated as 'pretransfer' editing and involves the hydrolysis of activated Val-AMP. The other activity is designated 'posttransfer' editing and involves deacylation of mischarged Val-tRNA(Ile). This Geobacillus thermodenitrificans (strain NG80-2) protein is Isoleucine--tRNA ligase.